The primary structure comprises 667 residues: Threonine--tRNA ligase (667 aa).

The TGS domain occupies 1-64 (MSEAISLTFP…TDGKIEIVTR (64 aa)). Residues 245-553 (DHRRLGREMD…LIENFAGHMP (309 aa)) form a catalytic region. Residues cysteine 347, histidine 398, and histidine 530 each coordinate Zn(2+).

It belongs to the class-II aminoacyl-tRNA synthetase family. Homodimer. Zn(2+) serves as cofactor.

It is found in the cytoplasm. It catalyses the reaction tRNA(Thr) + L-threonine + ATP = L-threonyl-tRNA(Thr) + AMP + diphosphate + H(+). In terms of biological role, catalyzes the attachment of threonine to tRNA(Thr) in a two-step reaction: L-threonine is first activated by ATP to form Thr-AMP and then transferred to the acceptor end of tRNA(Thr). Also edits incorrectly charged L-seryl-tRNA(Thr). The chain is Threonine--tRNA ligase from Agrobacterium fabrum (strain C58 / ATCC 33970) (Agrobacterium tumefaciens (strain C58)).